The sequence spans 308 residues: Probable inositol oxygenase (308 aa).

Residues Arg-49 and 106-108 each bind substrate; that span reads DDS. Fe cation is bound by residues His-119, His-144, and Asp-145. Residues Lys-148 and 165 to 166 each bind substrate; that span reads GD. The Fe cation site is built by His-217, His-243, and Asp-276. Position 243-244 (243-244) interacts with substrate; the sequence is HS.

The protein belongs to the myo-inositol oxygenase family. Fe cation is required as a cofactor.

Its subcellular location is the cytoplasm. The enzyme catalyses myo-inositol + O2 = D-glucuronate + H2O + H(+). Its pathway is polyol metabolism; myo-inositol degradation into D-glucuronate; D-glucuronate from myo-inositol: step 1/1. Involved in the biosynthesis of UDP-glucuronic acid (UDP-GlcA), providing nucleotide sugars for cell-wall polymers. May be also involved in plant ascorbate biosynthesis. In Oryza sativa subsp. japonica (Rice), this protein is Probable inositol oxygenase.